The chain runs to 402 residues: Oligopeptide transport ATP-binding protein OppD (402 aa).

The region spanning 22–309 (LDITDLHVNF…PLHPYTWALI (288 aa)) is the ABC transporter domain. Residue 58-65 (GESGSGKS) participates in ATP binding.

The protein belongs to the ABC transporter superfamily. As to quaternary structure, the complex is composed of two ATP-binding proteins (OppD and OppF), two transmembrane proteins (OppB and OppC) and a solute-binding protein (OppA).

The protein localises to the cell membrane. The catalysed reaction is a [peptide](out) + ATP + H2O = a [peptide](in) + ADP + phosphate + H(+). Part of the ABC transporter complex OppABCDF involved in the uptake of oligopeptides. Probably responsible for energy coupling to the transport system. The protein is Oligopeptide transport ATP-binding protein OppD (oppD) of Mycoplasma genitalium (strain ATCC 33530 / DSM 19775 / NCTC 10195 / G37) (Mycoplasmoides genitalium).